Reading from the N-terminus, the 378-residue chain is Succinyl-diaminopimelate desuccinylase (378 aa).

H68 is a binding site for Zn(2+). D70 is a catalytic residue. Residue D102 coordinates Zn(2+). E136 (proton acceptor) is an active-site residue. Residues E137, E165, and H351 each coordinate Zn(2+).

This sequence belongs to the peptidase M20A family. DapE subfamily. As to quaternary structure, homodimer. Requires Zn(2+) as cofactor. The cofactor is Co(2+).

It carries out the reaction N-succinyl-(2S,6S)-2,6-diaminopimelate + H2O = (2S,6S)-2,6-diaminopimelate + succinate. It participates in amino-acid biosynthesis; L-lysine biosynthesis via DAP pathway; LL-2,6-diaminopimelate from (S)-tetrahydrodipicolinate (succinylase route): step 3/3. Catalyzes the hydrolysis of N-succinyl-L,L-diaminopimelic acid (SDAP), forming succinate and LL-2,6-diaminopimelate (DAP), an intermediate involved in the bacterial biosynthesis of lysine and meso-diaminopimelic acid, an essential component of bacterial cell walls. The protein is Succinyl-diaminopimelate desuccinylase of Pseudomonas syringae pv. syringae.